The sequence spans 83 residues: Cytochrome c oxidase subunit 7A2, mitochondrial (83 aa).

The transit peptide at 1–23 (MLRNLLALRQIAQRTISTTSRRH) directs the protein to the mitochondrion. Residues 24 to 48 (FENKVPEKQKLFQEDNGMPVHLKGG) lie on the Mitochondrial matrix side of the membrane. At K33 the chain carries N6-acetyllysine. Residues 49–77 (ASDALLYRATMALTLGGTAYAIYLLAMAA) traverse the membrane as a helical segment. Over 78–83 (FPKKQN) the chain is Mitochondrial intermembrane.

It belongs to the cytochrome c oxidase VIIa family. In terms of assembly, component of the cytochrome c oxidase (complex IV, CIV), a multisubunit enzyme composed of 14 subunits. The complex is composed of a catalytic core of 3 subunits MT-CO1, MT-CO2 and MT-CO3, encoded in the mitochondrial DNA, and 11 supernumerary subunits COX4I, COX5A, COX5B, COX6A, COX6B, COX6C, COX7A, COX7B, COX7C, COX8 and NDUFA4, which are encoded in the nuclear genome. The complex exists as a monomer or a dimer and forms supercomplexes (SCs) in the inner mitochondrial membrane with NADH-ubiquinone oxidoreductase (complex I, CI) and ubiquinol-cytochrome c oxidoreductase (cytochrome b-c1 complex, complex III, CIII), resulting in different assemblies (supercomplex SCI(1)III(2)IV(1) and megacomplex MCI(2)III(2)IV(2)). Interacts with PET100.

Its subcellular location is the mitochondrion inner membrane. It participates in energy metabolism; oxidative phosphorylation. Functionally, component of the cytochrome c oxidase, the last enzyme in the mitochondrial electron transport chain which drives oxidative phosphorylation. The respiratory chain contains 3 multisubunit complexes succinate dehydrogenase (complex II, CII), ubiquinol-cytochrome c oxidoreductase (cytochrome b-c1 complex, complex III, CIII) and cytochrome c oxidase (complex IV, CIV), that cooperate to transfer electrons derived from NADH and succinate to molecular oxygen, creating an electrochemical gradient over the inner membrane that drives transmembrane transport and the ATP synthase. Cytochrome c oxidase is the component of the respiratory chain that catalyzes the reduction of oxygen to water. Electrons originating from reduced cytochrome c in the intermembrane space (IMS) are transferred via the dinuclear copper A center (CU(A)) of subunit 2 and heme A of subunit 1 to the active site in subunit 1, a binuclear center (BNC) formed by heme A3 and copper B (CU(B)). The BNC reduces molecular oxygen to 2 water molecules using 4 electrons from cytochrome c in the IMS and 4 protons from the mitochondrial matrix. This Mus musculus (Mouse) protein is Cytochrome c oxidase subunit 7A2, mitochondrial (Cox7a2).